The chain runs to 193 residues: Oocyte-secreted protein 3 (193 aa).

An N-terminal signal peptide occupies residues 1–22; it reads MKDFVRLQSSFLLCTILTLSEQ. Asn-64, Asn-130, Asn-148, Asn-151, Asn-165, and Asn-178 each carry an N-linked (GlcNAc...) asparagine glycan.

This sequence belongs to the PLAC1 family.

It localises to the secreted. This is Oocyte-secreted protein 3 from Homo sapiens (Human).